The following is a 352-amino-acid chain: Protein RecA (352 aa).

ATP is bound at residue 74–81 (GPESSGKT).

Belongs to the RecA family.

The protein localises to the cytoplasm. Can catalyze the hydrolysis of ATP in the presence of single-stranded DNA, the ATP-dependent uptake of single-stranded DNA by duplex DNA, and the ATP-dependent hybridization of homologous single-stranded DNAs. It interacts with LexA causing its activation and leading to its autocatalytic cleavage. The chain is Protein RecA from Ralstonia nicotianae (strain ATCC BAA-1114 / GMI1000) (Ralstonia solanacearum).